Consider the following 348-residue polypeptide: Phosphoribosylformylglycinamidine cyclo-ligase (348 aa).

Belongs to the AIR synthase family.

It localises to the cytoplasm. It catalyses the reaction 2-formamido-N(1)-(5-O-phospho-beta-D-ribosyl)acetamidine + ATP = 5-amino-1-(5-phospho-beta-D-ribosyl)imidazole + ADP + phosphate + H(+). Its pathway is purine metabolism; IMP biosynthesis via de novo pathway; 5-amino-1-(5-phospho-D-ribosyl)imidazole from N(2)-formyl-N(1)-(5-phospho-D-ribosyl)glycinamide: step 2/2. This Geobacter sp. (strain M21) protein is Phosphoribosylformylglycinamidine cyclo-ligase.